We begin with the raw amino-acid sequence, 332 residues long: HPr kinase/phosphorylase (332 aa).

Active-site residues include H153 and K174. 168–175 contributes to the ATP binding site; it reads GKSGLGKS. S175 serves as a coordination point for Mg(2+). D192 serves as the catalytic Proton acceptor; for phosphorylation activity. Proton donor; for dephosphorylation activity. An important for the catalytic mechanism of both phosphorylation and dephosphorylation region spans residues 217–226; it reads MEIRGLGVVD. E218 contacts Mg(2+). R259 is a catalytic residue. Positions 280–285 are important for the catalytic mechanism of dephosphorylation; that stretch reads PIFPGK.

It belongs to the HPrK/P family. Homohexamer. Requires Mg(2+) as cofactor.

It carries out the reaction [HPr protein]-L-serine + ATP = [HPr protein]-O-phospho-L-serine + ADP + H(+). The catalysed reaction is [HPr protein]-O-phospho-L-serine + phosphate + H(+) = [HPr protein]-L-serine + diphosphate. In terms of biological role, catalyzes the ATP- as well as the pyrophosphate-dependent phosphorylation of a specific serine residue in HPr, a phosphocarrier protein of the phosphoenolpyruvate-dependent sugar phosphotransferase system (PTS). HprK/P also catalyzes the pyrophosphate-producing, inorganic phosphate-dependent dephosphorylation (phosphorolysis) of seryl-phosphorylated HPr (P-Ser-HPr). This is HPr kinase/phosphorylase from Chlorobium luteolum (strain DSM 273 / BCRC 81028 / 2530) (Pelodictyon luteolum).